The primary structure comprises 424 residues: D-inositol 3-phosphate glycosyltransferase (424 aa).

His-16 is a binding site for 1D-myo-inositol 3-phosphate. UDP-N-acetyl-alpha-D-glucosamine-binding positions include 22-23 and Gly-30; that span reads QP. 1D-myo-inositol 3-phosphate is bound by residues 27–32, Lys-85, Tyr-118, Thr-142, and Arg-162; that span reads DAGGMN. UDP-N-acetyl-alpha-D-glucosamine-binding residues include Arg-240 and Lys-245. Residues Met-313, Arg-314, and Ala-316 each coordinate Mg(2+). UDP-N-acetyl-alpha-D-glucosamine is bound by residues Glu-326 and Glu-334. Mg(2+) is bound at residue Thr-340.

This sequence belongs to the glycosyltransferase group 1 family. MshA subfamily. Homodimer.

The catalysed reaction is 1D-myo-inositol 3-phosphate + UDP-N-acetyl-alpha-D-glucosamine = 1D-myo-inositol 2-acetamido-2-deoxy-alpha-D-glucopyranoside 3-phosphate + UDP + H(+). In terms of biological role, catalyzes the transfer of a N-acetyl-glucosamine moiety to 1D-myo-inositol 3-phosphate to produce 1D-myo-inositol 2-acetamido-2-deoxy-glucopyranoside 3-phosphate in the mycothiol biosynthesis pathway. The sequence is that of D-inositol 3-phosphate glycosyltransferase from Jonesia denitrificans (strain ATCC 14870 / DSM 20603 / BCRC 15368 / CIP 55.134 / JCM 11481 / NBRC 15587 / NCTC 10816 / Prevot 55134) (Listeria denitrificans).